A 184-amino-acid chain; its full sequence is Isopentenyl-diphosphate Delta-isomerase (184 aa).

2 residues coordinate Mn(2+): histidine 25 and histidine 32. Residues 30–164 (PLHLAFSCWL…PWAFSPWMVL (135 aa)) form the Nudix hydrolase domain. Residue cysteine 67 is part of the active site. Residue histidine 69 participates in Mn(2+) binding. Glutamate 87 lines the Mg(2+) pocket. Mn(2+) is bound by residues glutamate 114 and glutamate 116. Glutamate 116 is an active-site residue.

Belongs to the IPP isomerase type 1 family. Homodimer. Mg(2+) is required as a cofactor. Requires Mn(2+) as cofactor.

It is found in the cytoplasm. The catalysed reaction is isopentenyl diphosphate = dimethylallyl diphosphate. It participates in isoprenoid biosynthesis; dimethylallyl diphosphate biosynthesis; dimethylallyl diphosphate from isopentenyl diphosphate: step 1/1. Its function is as follows. Catalyzes the 1,3-allylic rearrangement of the homoallylic substrate isopentenyl (IPP) to its highly electrophilic allylic isomer, dimethylallyl diphosphate (DMAPP). The polypeptide is Isopentenyl-diphosphate Delta-isomerase (Klebsiella pneumoniae subsp. pneumoniae (strain ATCC 700721 / MGH 78578)).